The sequence spans 430 residues: Drebrin-like protein (430 aa).

The region spanning 4 to 133 (NLSRNGPALQ…EPECIMEKVA (130 aa)) is the ADF-H domain. Residue Thr26 is modified to Phosphothreonine. 2 positions are modified to phosphoserine: Gly137 and Ser160. Lys176 carries the post-translational modification N6-acetyllysine. Positions 176–231 (KDSFWAKAEKEEENRRLEEKRRAEEAQRQLEQERRERELREAARREQRYQEQGGEA) form a coiled coil. 2 positions are modified to phosphoserine: Ala183 and Ser232. Positions 219–283 (RREQRYQEQG…SSPQPGKLRS (65 aa)) are disordered. The segment covering 233 to 244 (PQRTWEQQQEVV) has biased composition (polar residues). Basic and acidic residues predominate over residues 245 to 267 (SRNRNEQESAVHPREIFKQKERA). The segment covering 268-277 (MSTTSISSPQ) has biased composition (polar residues). Residues Ser269, Ser272, Ser275, and Ser283 each carry the phosphoserine modification. Residue Lys288 is modified to N6-acetyllysine. Thr291 is modified (phosphothreonine). Phosphotyrosine occurs at positions 334 and 344. One can recognise an SH3 domain in the interval 371 to 430 (GQGLCARALYDYQAADDTEISFDPENLITGIEVIDEGWWRGYGPDGHFGMFPANYVELIE).

The protein belongs to the ABP1 family. Interacts with SHANK2, SHANK3 and SYN1. Interacts with FGD1 and DNM1. Interacts with ANKRD54. Interacts with COBL. Interacts with WASL and WIPF1. Interacts with MAP4K1 and PRAM1. Degraded by caspases during apoptosis.

Its subcellular location is the cytoplasm. It is found in the cytoskeleton. The protein localises to the cell projection. It localises to the lamellipodium. The protein resides in the ruffle. Its subcellular location is the cell cortex. It is found in the cytosol. The protein localises to the synapse. It localises to the perikaryon. The protein resides in the neuron projection. Its subcellular location is the cell membrane. It is found in the cytoplasmic vesicle. The protein localises to the clathrin-coated vesicle membrane. It localises to the golgi apparatus membrane. The protein resides in the podosome. Its subcellular location is the early endosome. It is found in the dendrite. The protein localises to the postsynaptic density. Functionally, adapter protein that binds F-actin and DNM1, and thereby plays a role in receptor-mediated endocytosis. Plays a role in the reorganization of the actin cytoskeleton, formation of cell projections, such as neurites, in neuron morphogenesis and synapse formation via its interaction with WASL and COBL. Does not bind G-actin and promote actin polymerization by itself. Required for the formation of organized podosome rosettes. May act as a common effector of antigen receptor-signaling pathways in leukocytes. Acts as a key component of the immunological synapse that regulates T-cell activation by bridging TCRs and the actin cytoskeleton to gene activation and endocytic processes. This Homo sapiens (Human) protein is Drebrin-like protein (DBNL).